Here is a 501-residue protein sequence, read N- to C-terminus: Glycerol kinase (501 aa).

An ADP-binding site is contributed by T16. The ATP site is built by T16, T17, and S18. T16 contributes to the sn-glycerol 3-phosphate binding site. An ADP-binding site is contributed by R20. Sn-glycerol 3-phosphate is bound by residues R84, E85, Y135, and D242. 5 residues coordinate glycerol: R84, E85, Y135, D242, and Q243. The ADP site is built by T264 and G307. ATP contacts are provided by T264, G307, Q311, and G408. ADP is bound at residue G408.

This sequence belongs to the FGGY kinase family.

The catalysed reaction is glycerol + ATP = sn-glycerol 3-phosphate + ADP + H(+). Its pathway is polyol metabolism; glycerol degradation via glycerol kinase pathway; sn-glycerol 3-phosphate from glycerol: step 1/1. Its function is as follows. Key enzyme in the regulation of glycerol uptake and metabolism. Catalyzes the phosphorylation of glycerol to yield sn-glycerol 3-phosphate. This is Glycerol kinase from Saccharolobus islandicus (strain M.14.25 / Kamchatka #1) (Sulfolobus islandicus).